A 316-amino-acid chain; its full sequence is Acetaldehyde dehydrogenase (316 aa).

Residue 13-16 participates in NAD(+) binding; the sequence is SGNI. Catalysis depends on Cys131, which acts as the Acyl-thioester intermediate. NAD(+) is bound by residues 162–170 and Asn290; that span reads SAGPGTRAN.

This sequence belongs to the acetaldehyde dehydrogenase family.

The catalysed reaction is acetaldehyde + NAD(+) + CoA = acetyl-CoA + NADH + H(+). In terms of biological role, catalyzes the conversion of acetaldehyde to acetyl-CoA, using NAD(+) and coenzyme A. Is the final enzyme in the meta-cleavage pathway for the degradation of 2-aminophenol. This is Acetaldehyde dehydrogenase (amnH) from Pseudomonas sp.